Consider the following 403-residue polypeptide: MATAGGAAGLAALLGGASPHLLIVSASEEPAGGCRPDADLLLFATPQPSRPGPAPRRPALGRPPVKRKLNLETDHQYIAESLPAARGRARIPGRGAKSPGEKSRYETSLNLTTKRFLELLSQSPDGVVDLNWAAEVLKVQKRRIYDITNVLEGIQLITKKSKNNIQWLGSQVAAGASSRQRLLEKELRDLQAAERQLDDLIQTCTVRLRLLTEDPSNQHAAYVTCQDLRSIVDPSEQMVMVIKAPPETQLQVSDPGEAFQVSVRSTQGPIDVFLCPEDSSGVCSPVKSPFKAPAEELSPGSSQQRASPLLHSAQDVNMLLPEALLPGTALPTKCPTEDVSLSPLASMDTLLEHGKDDFPGFLADEFIALSPPQPQDYHFGLEEGEGISELFDCDFGDFTHLDF.

Residues 44–85 (ATPQPSRPGPAPRRPALGRPPVKRKLNLETDHQYIAESLPAA) form a cyclin A/CDK2 binding region. The interval 45-64 (TPQPSRPGPAPRRPALGRPP) is disordered. Residues 87–171 (GRARIPGRGA…KNNIQWLGSQ (85 aa)) mediate DNA binding. The interval 130-151 (LNWAAEVLKVQKRRIYDITNVL) is leucine-zipper. The DEF box signature appears at 135–171 (EVLKVQKRRIYDITNVLEGIQLITKKSKNNIQWLGSQ). The dimerization stretch occupies residues 172-261 (VAAGASSRQR…VSDPGEAFQV (90 aa)). Positions 335–403 (PTEDVSLSPL…DFGDFTHLDF (69 aa)) are transactivation. The retinoblastoma protein RB1 binding stretch occupies residues 375–392 (QDYHFGLEEGEGISELFD).

This sequence belongs to the E2F/DP family. As to quaternary structure, component of the DRTF1/E2F transcription factor complex. Forms heterodimers with DP family members. The E2F1 complex binds specifically hypophosphorylated RB1, the interaction represses E2F1-driven transcription. During the cell cycle, RB1 becomes phosphorylated in mid-to-late G1 phase, detaches from the DRTF1/E2F complex, rendering E2F transcriptionally active. Viral oncoproteins, notably E1A, T-antigen and HPV E7, are capable of sequestering RB1, thus releasing the active complex.

The protein resides in the nucleus. Transcription activator that binds DNA cooperatively with DP proteins through the E2 recognition site, 5'-TTTC[CG]CGC-3' found in the promoter region of a number of genes whose products are involved in cell cycle regulation or in DNA replication. The DRTF1/E2F complex functions in the control of cell-cycle progression from G1 to S phase. E2F1 binds preferentially RB1 in a cell-cycle dependent manner. It can mediate both cell proliferation and TP53/p53-dependent apoptosis. Blocks adipocyte differentiation by binding to specific promoters repressing CEBPA binding to its target gene promoters. Positively regulates transcription of RRP1B. This Gallus gallus (Chicken) protein is Transcription factor E2F1.